An 88-amino-acid polypeptide reads, in one-letter code: Sec-independent protein translocase protein TatA (88 aa).

The chain crosses the membrane as a helical span at residues 4–24; the sequence is LSIWHWLIVLAVVLVLFVGGG. The tract at residues 45–88 is disordered; sequence ADDETMEGSTGSGGHIAPPGPAAGTVQRDASFSGTGRPSGSSTP. Low complexity predominate over residues 75–88; the sequence is SFSGTGRPSGSSTP.

Belongs to the TatA/E family. The Tat system comprises two distinct complexes: a TatABC complex, containing multiple copies of TatA, TatB and TatC subunits, and a separate TatA complex, containing only TatA subunits. Substrates initially bind to the TatABC complex, which probably triggers association of the separate TatA complex to form the active translocon.

The protein resides in the cell inner membrane. Part of the twin-arginine translocation (Tat) system that transports large folded proteins containing a characteristic twin-arginine motif in their signal peptide across membranes. TatA could form the protein-conducting channel of the Tat system. The protein is Sec-independent protein translocase protein TatA of Gluconacetobacter diazotrophicus (strain ATCC 49037 / DSM 5601 / CCUG 37298 / CIP 103539 / LMG 7603 / PAl5).